A 777-amino-acid polypeptide reads, in one-letter code: Zygote defective protein 12 (777 aa).

Basic and acidic residues-rich tracts occupy residues 1-10 and 18-36; these read MLDLTNKESE and KYED…PFKE. The disordered stretch occupies residues 1 to 36; sequence MLDLTNKESESSDNGNSKYEDSIDGREVGTSKPFKE. Positions 1 to 234 are interaction with dli-1; the sequence is MLDLTNKESE…ESSGKLNGNG (234 aa). In terms of domain architecture, Calponin-homology (CH) spans 44–169; that stretch reads QADLADMAVW…VTLAHIGKNA (126 aa). Disordered stretches follow at residues 217–242 and 273–292; these read QSEL…RSNA and SFET…DISI. Residues 218-235 show a composition bias toward low complexity; it reads SELNSLSESSGKLNGNGS. Coiled-coil stretches lie at residues 236–399 and 425–688; these read SERR…HHVK and NTEL…QENR. Residues 273-288 are compositionally biased toward polar residues; the sequence is SFETAQHDMSSNSESG. Residues 747–767 form a helical membrane-spanning segment; the sequence is AMASILVLGFLVFIAWMFINI. The segment at 749 to 777 is interaction with unc-84; that stretch reads ASILVLGFLVFIAWMFININSALNAPPNA.

It belongs to the hook family. Homodimer. Interacts with the dynein subunit dli-1 via its N-terminus. May interact with microtubules. Interacts with sut-2. Interacts (via C-terminus) with unc-84 (via C-terminus); the interaction is direct. Expressed in the syncytial gonad, oocytes, and in all cells during the development of the early embryo.

It is found in the nucleus membrane. Its subcellular location is the cytoplasm. The protein localises to the cytoskeleton. It localises to the microtubule organizing center. The protein resides in the centrosome. Cytoskeletal linker protein, which is essential for attachment of the centrosome to the nucleus. Required for dynein localization to the nuclear envelope. Forms a LINC (LInker of Nucleoskeleton and Cytoskeleton) complex together with unc-84, that may be involved in DNA damage repair. This chain is Zygote defective protein 12, found in Caenorhabditis elegans.